The following is a 115-amino-acid chain: Large ribosomal subunit protein bL20 (115 aa).

It belongs to the bacterial ribosomal protein bL20 family.

Its function is as follows. Binds directly to 23S ribosomal RNA and is necessary for the in vitro assembly process of the 50S ribosomal subunit. It is not involved in the protein synthesizing functions of that subunit. In Pelodictyon phaeoclathratiforme (strain DSM 5477 / BU-1), this protein is Large ribosomal subunit protein bL20.